We begin with the raw amino-acid sequence, 269 residues long: Type II methyltransferase M2.LlaDCHI (269 aa).

Belongs to the N(4)/N(6)-methyltransferase family.

The enzyme catalyses a 2'-deoxyadenosine in DNA + S-adenosyl-L-methionine = an N(6)-methyl-2'-deoxyadenosine in DNA + S-adenosyl-L-homocysteine + H(+). A beta subtype methylase, recognizes the double-stranded sequence 5'-GATC-3', methylates A-2 on both strands, and protects the DNA from cleavage by the LlaDCHI endonuclease. The sequence is that of Type II methyltransferase M2.LlaDCHI from Lactococcus lactis subsp. cremoris (Streptococcus cremoris).